A 329-amino-acid chain; its full sequence is Sulfate-binding protein (329 aa).

The signal sequence occupies residues 1 to 19 (MNKWGVGLTFLLAATSVMA).

It belongs to the prokaryotic sulfate-binding protein family.

The protein resides in the periplasm. Functionally, this protein specifically binds sulfate and is involved in its transmembrane transport. In Escherichia coli (strain K12), this protein is Sulfate-binding protein (sbp).